The sequence spans 275 residues: Phosphate import ATP-binding protein PstB (275 aa).

Positions 28–270 (IDCRDIRVFY…PREKRTEDYI (243 aa)) constitute an ABC transporter domain. 60 to 67 (GPSGCGKS) lines the ATP pocket.

This sequence belongs to the ABC transporter superfamily. Phosphate importer (TC 3.A.1.7) family. The complex is composed of two ATP-binding proteins (PstB), two transmembrane proteins (PstC and PstA) and a solute-binding protein (PstS).

Its subcellular location is the cell inner membrane. The enzyme catalyses phosphate(out) + ATP + H2O = ADP + 2 phosphate(in) + H(+). Functionally, part of the ABC transporter complex PstSACB involved in phosphate import. Responsible for energy coupling to the transport system. The protein is Phosphate import ATP-binding protein PstB of Hyphomonas neptunium (strain ATCC 15444).